The following is a 142-amino-acid chain: Universal stress protein C (142 aa).

This sequence belongs to the universal stress protein A family.

Its subcellular location is the cytoplasm. In terms of biological role, required for resistance to DNA-damaging agents. The sequence is that of Universal stress protein C (uspC) from Escherichia coli O6:H1 (strain CFT073 / ATCC 700928 / UPEC).